We begin with the raw amino-acid sequence, 87 residues long: Tektin-2 (87 aa).

Residues 26 to 55 (VEEELLKEVEVIEATKKALQQRVSQAFQQL) adopt a coiled-coil conformation.

This sequence belongs to the tektin family. As to quaternary structure, microtubule inner protein component of sperm flagellar doublet microtubules. May interact with CCDC172. In terms of processing, tyrosine phosphorylated. Ubiquitinated, leading to its degradation. Deubiquitinated by USP16, promoting its stability. In terms of tissue distribution, detected in sperm flagella (at protein level).

It is found in the cytoplasm. The protein localises to the cytoskeleton. The protein resides in the cilium axoneme. It localises to the flagellum axoneme. Its subcellular location is the microtubule organizing center. Microtubule inner protein (MIP) part of the dynein-decorated doublet microtubules (DMTs) in cilia and flagellar axoneme. Plays a key role in the assembly or attachment of the inner dynein arm to microtubules in sperm flagella and tracheal cilia. Forms filamentous polymers in the walls of ciliary and flagellar microtubules. This Mesocricetus auratus (Golden hamster) protein is Tektin-2.